A 336-amino-acid chain; its full sequence is Dihydroorotate dehydrogenase (quinone) (336 aa).

Residues 62-66 (AGLDK) and T86 each bind FMN. K66 serves as a coordination point for substrate. Position 111-115 (111-115 (NRMGF)) interacts with substrate. Residues N139 and N172 each contribute to the FMN site. N172 lines the substrate pocket. S175 (nucleophile) is an active-site residue. N177 contacts substrate. 2 residues coordinate FMN: K217 and T245. 246-247 (NT) is a substrate binding site. Residues G268, G297, and 318 to 319 (YS) each bind FMN.

It belongs to the dihydroorotate dehydrogenase family. Type 2 subfamily. As to quaternary structure, monomer. Requires FMN as cofactor.

The protein resides in the cell membrane. It catalyses the reaction (S)-dihydroorotate + a quinone = orotate + a quinol. Its pathway is pyrimidine metabolism; UMP biosynthesis via de novo pathway; orotate from (S)-dihydroorotate (quinone route): step 1/1. Its function is as follows. Catalyzes the conversion of dihydroorotate to orotate with quinone as electron acceptor. The sequence is that of Dihydroorotate dehydrogenase (quinone) from Shigella dysenteriae serotype 1 (strain Sd197).